The sequence spans 315 residues: Ferrochelatase (315 aa).

Residues H193 and E273 each coordinate Fe cation.

It belongs to the ferrochelatase family.

The protein localises to the cytoplasm. The enzyme catalyses heme b + 2 H(+) = protoporphyrin IX + Fe(2+). It functions in the pathway porphyrin-containing compound metabolism; protoheme biosynthesis; protoheme from protoporphyrin-IX: step 1/1. In terms of biological role, catalyzes the ferrous insertion into protoporphyrin IX. This chain is Ferrochelatase, found in Wolbachia pipientis wMel.